A 226-amino-acid polypeptide reads, in one-letter code: Lipoprotein-releasing system ATP-binding protein LolD (226 aa).

Positions 5 to 226 constitute an ABC transporter domain; sequence LKATNINKIY…LLRNGHWENY (222 aa). 41-48 provides a ligand contact to ATP; it reads GTSGSGKS.

This sequence belongs to the ABC transporter superfamily. Lipoprotein translocase (TC 3.A.1.125) family. As to quaternary structure, the complex is composed of two ATP-binding proteins (LolD) and two transmembrane proteins (LolC and LolE).

The protein localises to the cell inner membrane. In terms of biological role, part of the ABC transporter complex LolCDE involved in the translocation of mature outer membrane-directed lipoproteins, from the inner membrane to the periplasmic chaperone, LolA. Responsible for the formation of the LolA-lipoprotein complex in an ATP-dependent manner. The sequence is that of Lipoprotein-releasing system ATP-binding protein LolD from Psychrobacter arcticus (strain DSM 17307 / VKM B-2377 / 273-4).